The following is a 190-amino-acid chain: CASP-like protein 1E1 (190 aa).

The segment at 1–21 (MEHESKTKMDGIEMEKGKKEN) is disordered. Over 1-28 (MEHESKTKMDGIEMEKGKKENGSRKGVE) the chain is Cytoplasmic. Residues 29–49 (ITMRVLALVLTMVAATVLGVA) form a helical membrane-spanning segment. The Extracellular portion of the chain corresponds to 50–83 (KQTEVVPIKLIPTLPPLNVATTAKASYLSAFVYN). A helical transmembrane segment spans residues 84-104 (ICANAIACGYTAISIMIVIIS). Residues 105–111 (KGRRSKC) are Cytoplasmic-facing. Residues 112–132 (LLMAVLIGDLMMVALLCSSTG) form a helical membrane-spanning segment. Residues 133-163 (AAGAIGLMGRHGNKHVMWKKVCGVFGKFCNQ) lie on the Extracellular side of the membrane. A helical transmembrane segment spans residues 164-184 (AAVSVAITLIASVVFMLLVVL). At 185-190 (DALKLP) the chain is on the cytoplasmic side.

This sequence belongs to the Casparian strip membrane proteins (CASP) family. As to quaternary structure, homodimer and heterodimers.

Its subcellular location is the cell membrane. In Arabidopsis lyrata subsp. lyrata (Lyre-leaved rock-cress), this protein is CASP-like protein 1E1.